We begin with the raw amino-acid sequence, 131 residues long: D-ribose pyranase (131 aa).

The active-site Proton donor is the H20. Substrate contacts are provided by residues D28, H98, and 120–122 (YAN).

The protein belongs to the RbsD / FucU family. RbsD subfamily. In terms of assembly, homodecamer.

It localises to the cytoplasm. It carries out the reaction beta-D-ribopyranose = beta-D-ribofuranose. It participates in carbohydrate metabolism; D-ribose degradation; D-ribose 5-phosphate from beta-D-ribopyranose: step 1/2. Functionally, catalyzes the interconversion of beta-pyran and beta-furan forms of D-ribose. The chain is D-ribose pyranase from Clostridium perfringens (strain 13 / Type A).